The primary structure comprises 282 residues: Pantothenate synthetase (282 aa).

ATP is bound at residue 26-33; the sequence is MGNLHEGH. Residue His-33 is the Proton donor of the active site. Gln-57 is a binding site for (R)-pantoate. Gln-57 is a binding site for beta-alanine. 144 to 147 provides a ligand contact to ATP; it reads GQKD. Gln-150 serves as a coordination point for (R)-pantoate. ATP-binding positions include Leu-173 and 181 to 184; that span reads LSSR.

It belongs to the pantothenate synthetase family. In terms of assembly, homodimer.

The protein resides in the cytoplasm. The enzyme catalyses (R)-pantoate + beta-alanine + ATP = (R)-pantothenate + AMP + diphosphate + H(+). It participates in cofactor biosynthesis; (R)-pantothenate biosynthesis; (R)-pantothenate from (R)-pantoate and beta-alanine: step 1/1. In terms of biological role, catalyzes the condensation of pantoate with beta-alanine in an ATP-dependent reaction via a pantoyl-adenylate intermediate. This is Pantothenate synthetase from Albidiferax ferrireducens (strain ATCC BAA-621 / DSM 15236 / T118) (Rhodoferax ferrireducens).